We begin with the raw amino-acid sequence, 253 residues long: ER membrane protein complex subunit 3 (253 aa).

3 helical membrane passes run 10 to 30 (WVLL…QYIM), 126 to 146 (FIPQ…FILM), and 176 to 196 (SISW…LIGL).

This sequence belongs to the EMC3 family. As to quaternary structure, component of the ER membrane protein complex (EMC), which is composed of EMC1, EMC2, EMC3, EMC4, EMC5 and EMC6.

The protein localises to the endoplasmic reticulum membrane. Functionally, the EMC seems to be required for efficient folding of proteins in the endoplasmic reticulum (ER). The protein is ER membrane protein complex subunit 3 (AIM27) of Saccharomyces cerevisiae (strain YJM789) (Baker's yeast).